A 439-amino-acid chain; its full sequence is Eukaryotic translation initiation factor 2 subunit gamma (439 aa).

The region spanning 11 to 215 (QATLNIGTIG…FIVNYIPEPV (205 aa)) is the tr-type G domain. The G1 stretch occupies residues 20 to 27 (GHVAHGKS). A GTP-binding site is contributed by 23-28 (AHGKST). A G2 region spans residues 48–52 (NITIK). Positions 103 to 106 (DCPG) are G3. Residues 159–162 (NKID) and 193–195 (AAQ) contribute to the GTP site. Positions 159–162 (NKID) are G4. Residues 193–195 (AAQ) are G5. The interacts with CDC123 stretch occupies residues 415–427 (GEIKDGTCIEPEY).

Belongs to the TRAFAC class translation factor GTPase superfamily. Classic translation factor GTPase family. EIF2G subfamily. In terms of assembly, eukaryotic translation initiation factor 2 eIF2 is a heterotrimeric complex composed of an alpha, a beta and a gamma subunit. The factors eIF-1, eIF-2, eIF-3, TIF5/eIF-5 and methionyl-tRNAi form a multifactor complex (MFC) that may bind to the 40S ribosome.

It is found in the cytoplasm. The protein localises to the cytosol. It carries out the reaction GTP + H2O = GDP + phosphate + H(+). Its function is as follows. As a subunit of eukaryotic initiation factor 2 eIF2, involved in the early steps of protein synthesis. In the presence of GTP, eIF-2 forms a ternary complex with initiator tRNA Met-tRNAi and then recruits the 40S ribosomal complex and initiation factors eIF-1, eIF-1A and eIF-3 to form the 43S pre-initiation complex (43S PIC), a step that determines the rate of protein translation. The 43S PIC binds to mRNA and scans downstream to the initiation codon, where it forms a 48S initiation complex by codon-anticodon base pairing. This leads to the displacement of eIF-1 to allow GTPase-activating protein (GAP) eIF-5-mediated hydrolysis of eIF2-bound GTP. Hydrolysis of GTP and release of Pi, which makes GTP hydrolysis irreversible, causes the release of the eIF-2-GDP binary complex from the 40S subunit, an event that is essential for the subsequent joining of the 60S ribosomal subunit to form an elongation-competent 80S ribosome. In order for eIF-2 to recycle and catalyze another round of initiation, the GDP bound to eIF-2 must be exchanged with GTP by way of a reaction catalyzed by GDP-GTP exchange factor (GEF) eIF-2B. This chain is Eukaryotic translation initiation factor 2 subunit gamma, found in Encephalitozoon cuniculi (strain GB-M1) (Microsporidian parasite).